The chain runs to 311 residues: Porphobilinogen deaminase (311 aa).

S-(dipyrrolylmethanemethyl)cysteine is present on Cys245.

The protein belongs to the HMBS family. In terms of assembly, monomer. Dipyrromethane serves as cofactor.

The catalysed reaction is 4 porphobilinogen + H2O = hydroxymethylbilane + 4 NH4(+). It functions in the pathway porphyrin-containing compound metabolism; protoporphyrin-IX biosynthesis; coproporphyrinogen-III from 5-aminolevulinate: step 2/4. In terms of biological role, tetrapolymerization of the monopyrrole PBG into the hydroxymethylbilane pre-uroporphyrinogen in several discrete steps. This Deinococcus deserti (strain DSM 17065 / CIP 109153 / LMG 22923 / VCD115) protein is Porphobilinogen deaminase.